Consider the following 337-residue polypeptide: tRNA N6-adenosine threonylcarbamoyltransferase (337 aa).

2 residues coordinate Fe cation: H111 and H115. Substrate-binding positions include 134–138 (LVSGG), D167, G180, and N272. A Fe cation-binding site is contributed by D300.

Belongs to the KAE1 / TsaD family. Fe(2+) is required as a cofactor.

The protein localises to the cytoplasm. It catalyses the reaction L-threonylcarbamoyladenylate + adenosine(37) in tRNA = N(6)-L-threonylcarbamoyladenosine(37) in tRNA + AMP + H(+). Functionally, required for the formation of a threonylcarbamoyl group on adenosine at position 37 (t(6)A37) in tRNAs that read codons beginning with adenine. Is involved in the transfer of the threonylcarbamoyl moiety of threonylcarbamoyl-AMP (TC-AMP) to the N6 group of A37, together with TsaE and TsaB. TsaD likely plays a direct catalytic role in this reaction. The chain is tRNA N6-adenosine threonylcarbamoyltransferase from Citrobacter koseri (strain ATCC BAA-895 / CDC 4225-83 / SGSC4696).